The primary structure comprises 151 residues: Large ribosomal subunit protein uL13 (151 aa).

It belongs to the universal ribosomal protein uL13 family. In terms of assembly, part of the 50S ribosomal subunit.

Its function is as follows. This protein is one of the early assembly proteins of the 50S ribosomal subunit, although it is not seen to bind rRNA by itself. It is important during the early stages of 50S assembly. This Acaryochloris marina (strain MBIC 11017) protein is Large ribosomal subunit protein uL13.